Here is a 141-residue protein sequence, read N- to C-terminus: uncharacterized protein (141 aa).

This is an uncharacterized protein from Thermoproteus tenax (TTV1).